The following is a 354-amino-acid chain: Ferrochelatase (354 aa).

The Fe cation site is built by His-204 and Glu-306.

Belongs to the ferrochelatase family.

The protein localises to the cytoplasm. It catalyses the reaction heme b + 2 H(+) = protoporphyrin IX + Fe(2+). It participates in porphyrin-containing compound metabolism; protoheme biosynthesis; protoheme from protoporphyrin-IX: step 1/1. Functionally, catalyzes the ferrous insertion into protoporphyrin IX. The protein is Ferrochelatase of Coxiella burnetii (strain CbuG_Q212) (Coxiella burnetii (strain Q212)).